The chain runs to 204 residues: Holliday junction branch migration complex subunit RuvA (204 aa).

Residues 1-64 form a domain I region; the sequence is MFAFLRGELV…EDLQQLFGFL (64 aa). Residues 65-143 are domain II; the sequence is DEEELQLFRL…KIQPTSSAKA (79 aa). A flexible linker region spans residues 144 to 151; sequence GAPSAVLS. Positions 151 to 204 are domain III; the sequence is SATQLIDDAVAALTTLGFPKASAQKAVSKVLETTPGLSVEELVRTSLAAMHNNL.

This sequence belongs to the RuvA family. Homotetramer. Forms an RuvA(8)-RuvB(12)-Holliday junction (HJ) complex. HJ DNA is sandwiched between 2 RuvA tetramers; dsDNA enters through RuvA and exits via RuvB. An RuvB hexamer assembles on each DNA strand where it exits the tetramer. Each RuvB hexamer is contacted by two RuvA subunits (via domain III) on 2 adjacent RuvB subunits; this complex drives branch migration. In the full resolvosome a probable DNA-RuvA(4)-RuvB(12)-RuvC(2) complex forms which resolves the HJ.

It localises to the cytoplasm. Functionally, the RuvA-RuvB-RuvC complex processes Holliday junction (HJ) DNA during genetic recombination and DNA repair, while the RuvA-RuvB complex plays an important role in the rescue of blocked DNA replication forks via replication fork reversal (RFR). RuvA specifically binds to HJ cruciform DNA, conferring on it an open structure. The RuvB hexamer acts as an ATP-dependent pump, pulling dsDNA into and through the RuvAB complex. HJ branch migration allows RuvC to scan DNA until it finds its consensus sequence, where it cleaves and resolves the cruciform DNA. The sequence is that of Holliday junction branch migration complex subunit RuvA from Chlorobaculum parvum (strain DSM 263 / NCIMB 8327) (Chlorobium vibrioforme subsp. thiosulfatophilum).